The chain runs to 61 residues: MARKGLVERWKKPKKFKTREYTRCKICGRTHSVYREFGVCRVCFRKMANEGKLPGVRKATW.

4 residues coordinate Zn(2+): Cys24, Cys27, Cys40, and Cys43.

The protein belongs to the universal ribosomal protein uS14 family. Zinc-binding uS14 subfamily. In terms of assembly, part of the 30S ribosomal subunit. Contacts proteins S3 and S10. Zn(2+) is required as a cofactor.

In terms of biological role, binds 16S rRNA, required for the assembly of 30S particles and may also be responsible for determining the conformation of the 16S rRNA at the A site. The chain is Small ribosomal subunit protein uS14 from Thermosipho melanesiensis (strain DSM 12029 / CIP 104789 / BI429).